The sequence spans 1153 residues: uncharacterized protein (1153 aa).

10 disordered regions span residues Thr-164 to Asp-193, Asp-224 to Lys-245, Lys-294 to His-316, Glu-332 to Lys-427, Leu-613 to Asn-648, Gln-683 to Ser-703, Lys-717 to Lys-740, Asn-772 to Glu-819, Ala-838 to Lys-874, and Asn-942 to Val-1106. The span at Leu-169–Gln-179 shows a compositional bias: pro residues. Composition is skewed to low complexity over residues Asn-231–Asn-240, Lys-298–Lys-312, Gln-336–Lys-391, and Asn-399–Asn-423. The span at Leu-613–Gln-625 shows a compositional bias: polar residues. Basic and acidic residues predominate over residues Gln-687 to Asp-699. Low complexity predominate over residues Asn-721 to Asn-734. The segment covering Asn-772 to Thr-784 has biased composition (basic and acidic residues). 2 stretches are compositionally biased toward low complexity: residues Thr-788–Asn-808 and Ser-839–Ser-854. Residues Thr-856–Lys-874 show a composition bias toward basic and acidic residues. A compositionally biased stretch (low complexity) spans Asn-942–Asn-987. 2 stretches are compositionally biased toward polar residues: residues Pro-988–Thr-998 and Gln-1005–Pro-1015. Over residues Ile-1019–Ser-1059 the composition is skewed to low complexity. Positions Asp-1064–Lys-1081 are enriched in basic and acidic residues. The segment covering Asn-1082–Glu-1105 has biased composition (low complexity).

This is an uncharacterized protein from Dictyostelium discoideum (Social amoeba).